The chain runs to 329 residues: Beta-ketoacyl-[acyl-carrier-protein] synthase III (329 aa).

Residues cysteine 113 and histidine 255 contribute to the active site. An ACP-binding region spans residues 256–260; the sequence is QANQR. Residue asparagine 285 is part of the active site.

Belongs to the thiolase-like superfamily. FabH family. In terms of assembly, homodimer.

Its subcellular location is the cytoplasm. It carries out the reaction malonyl-[ACP] + acetyl-CoA + H(+) = 3-oxobutanoyl-[ACP] + CO2 + CoA. It participates in lipid metabolism; fatty acid biosynthesis. Its function is as follows. Catalyzes the condensation reaction of fatty acid synthesis by the addition to an acyl acceptor of two carbons from malonyl-ACP. Catalyzes the first condensation reaction which initiates fatty acid synthesis and may therefore play a role in governing the total rate of fatty acid production. Possesses both acetoacetyl-ACP synthase and acetyl transacylase activities. Its substrate specificity determines the biosynthesis of branched-chain and/or straight-chain of fatty acids. In Chlorobaculum tepidum (strain ATCC 49652 / DSM 12025 / NBRC 103806 / TLS) (Chlorobium tepidum), this protein is Beta-ketoacyl-[acyl-carrier-protein] synthase III.